Reading from the N-terminus, the 342-residue chain is MKALAKLERAPGLTLTRVKRPEVGHNDVLIKIRRTAICGTDIHIWKWDDWAQKTIPVPMHVGHEYVGEIVEMGQEVRGFAIGDRVSGEGHITCGFCRNCRAGRRHLCRNTVGVGVNREGAFAEYLAIPAFNAFKIPPEISDDLASIFDPFGNATHTALSFNLVGEDVLITGAGPIGIMAVAIAKHVGARNVVITDINDYRLELARKMGATRAVNVARESLRDVMADLRMTEGFDVGLEMSGVPSAFTSLLEAMNHGGKVALLGIPPAQTAIDWNQVIFKGLEIKGIYGREMFETWYKMVAMLQSGLDLSPIITHRFAADDYEKGFAAMLSGESGKVILDWTV.

Cysteine 38 provides a ligand contact to Zn(2+). Residues threonine 40 and histidine 43 each act as charge relay system in the active site. Zn(2+) is bound by residues histidine 63, glutamate 64, cysteine 93, cysteine 96, cysteine 99, and cysteine 107. NAD(+) is bound by residues isoleucine 175, aspartate 195, arginine 200, 262–264 (LGI), and 286–287 (IY).

Belongs to the zinc-containing alcohol dehydrogenase family. Homotetramer. Requires Zn(2+) as cofactor.

Its subcellular location is the cytoplasm. The enzyme catalyses L-threonine + NAD(+) = (2S)-2-amino-3-oxobutanoate + NADH + H(+). It participates in amino-acid degradation; L-threonine degradation via oxydo-reductase pathway; glycine from L-threonine: step 1/2. Catalyzes the NAD(+)-dependent oxidation of L-threonine to 2-amino-3-ketobutyrate. In Burkholderia multivorans (strain ATCC 17616 / 249), this protein is L-threonine 3-dehydrogenase.